Consider the following 522-residue polypeptide: Amine oxidase [flavin-containing] (522 aa).

Topologically, residues 1-492 (MTANAYDVIV…WERNLPSVGG (492 aa)) are cytoplasmic. Position 398 is an S-8alpha-FAD cysteine (C398). A helical; Anchor for type IV membrane protein transmembrane segment spans residues 493 to 513 (FLKFMGVSSFLAAATAAGLVA). Topologically, residues 514–522 (CKKGLLPRC) are mitochondrial intermembrane.

It belongs to the flavin monoamine oxidase family. In terms of assembly, monomer, homo- or heterodimer (containing two subunits of similar size). Each subunit contains a covalently bound flavin. Enzymatically active as monomer. It depends on FAD as a cofactor. As to expression, strongest expression in brain and intestine, followed by liver, heart and gill. Little expression in spleen, eye or muscle. In brain, highest activity in noradrenergic and serotonergic cell groups and those of the habenulointerpeduncular pathway; moderate levels in dopaminergic cell clusters.

It localises to the mitochondrion outer membrane. It carries out the reaction a secondary aliphatic amine + O2 + H2O = a primary amine + an aldehyde + H2O2. The catalysed reaction is a primary methyl amine + O2 + H2O = an aldehyde + H2O2 + NH4(+). It catalyses the reaction serotonin + O2 + H2O = (5-hydroxyindol-3-yl)acetaldehyde + H2O2 + NH4(+). The enzyme catalyses 2-phenylethylamine + O2 + H2O = 2-phenylacetaldehyde + H2O2 + NH4(+). It carries out the reaction tyramine + O2 + H2O = (4-hydroxyphenyl)acetaldehyde + H2O2 + NH4(+). The catalysed reaction is dopamine + O2 + H2O = 3,4-dihydroxyphenylacetaldehyde + H2O2 + NH4(+). It catalyses the reaction (R)-adrenaline + O2 + H2O = (R)-3,4-dihydroxymandelaldehyde + methylamine + H2O2. The enzyme catalyses (R)-noradrenaline + O2 + H2O = (R)-3,4-dihydroxymandelaldehyde + H2O2 + NH4(+). It carries out the reaction kynuramine + O2 + H2O = 3-(2-aminophenyl)-3-oxopropanal + H2O2 + NH4(+). The catalysed reaction is tryptamine + O2 + H2O = indole-3-acetaldehyde + H2O2 + NH4(+). Inhibited by both clorgyline (selective MAOA inhibitor) and deprenyl (selective MAOB inhibitor). Catalyzes the oxidative deamination of biogenic and xenobiotic amines and has important functions in the metabolism of neuroactive and vasoactive amines in the central nervous system and peripheral tissues. Preferentially oxidizes serotonin and tyramine. Also catalyzes the oxidative deamination of kynuramine to 3-(2-aminophenyl)-3-oxopropanal that can spontaneously condense to 4-hydroxyquinoline. The sequence is that of Amine oxidase [flavin-containing] from Danio rerio (Zebrafish).